We begin with the raw amino-acid sequence, 114 residues long: Probable divalent-cation tolerance protein cutA homolog (114 aa).

Belongs to the CutA family. As to quaternary structure, homotrimer.

In Encephalitozoon cuniculi (strain GB-M1) (Microsporidian parasite), this protein is Probable divalent-cation tolerance protein cutA homolog.